A 294-amino-acid chain; its full sequence is Elongation factor Ts (294 aa).

An involved in Mg(2+) ion dislocation from EF-Tu region spans residues 82 to 85 (TDFV).

This sequence belongs to the EF-Ts family.

It is found in the cytoplasm. In terms of biological role, associates with the EF-Tu.GDP complex and induces the exchange of GDP to GTP. It remains bound to the aminoacyl-tRNA.EF-Tu.GTP complex up to the GTP hydrolysis stage on the ribosome. In Nitrosomonas eutropha (strain DSM 101675 / C91 / Nm57), this protein is Elongation factor Ts.